Reading from the N-terminus, the 261-residue chain is Cytochrome c oxidase subunit 3 (261 aa).

Topologically, residues 1 to 15 (MAHQAHAYHMVDPSP) are mitochondrial matrix. A helical transmembrane segment spans residues 16-34 (WPLTGAIGALFLTSGLAIW). The Mitochondrial intermembrane segment spans residues 35–40 (FHFQSV). A helical membrane pass occupies residues 41 to 66 (TLLTLGLILLLLTMYQWWRDIIREGT). At 67–72 (FQGHHT) the chain is on the mitochondrial matrix side. A helical transmembrane segment spans residues 73–105 (PPVQKGLRYGMILFITSEVFFFLGFFWAFYHSS). Topologically, residues 106–128 (LAPTPELGGCWPPTGITPLDPFE) are mitochondrial intermembrane. The helical transmembrane segment at 129 to 152 (VPLLNTAVLLASGVTVTWAHHSLM) threads the bilayer. The Mitochondrial matrix portion of the chain corresponds to 153 to 155 (EGA). A helical membrane pass occupies residues 156-183 (RKQAIQALALTIILGVYFTALQAMEYYE). Over 184 to 190 (APFTIAD) the chain is Mitochondrial intermembrane. The chain crosses the membrane as a helical span at residues 191–223 (GVYGSTFFVATGFHGLHVIIGSSFLAVCLLRQI). At 224 to 232 (QYHFTSEHH) the chain is on the mitochondrial matrix side. Residues 233-256 (FGFEAAAWYWHFVDVVWLFLYVSI) traverse the membrane as a helical segment. Over 257–261 (YWWGS) the chain is Mitochondrial intermembrane.

This sequence belongs to the cytochrome c oxidase subunit 3 family. In terms of assembly, component of the cytochrome c oxidase (complex IV, CIV), a multisubunit enzyme composed of 14 subunits. The complex is composed of a catalytic core of 3 subunits MT-CO1, MT-CO2 and MT-CO3, encoded in the mitochondrial DNA, and 11 supernumerary subunits COX4I, COX5A, COX5B, COX6A, COX6B, COX6C, COX7A, COX7B, COX7C, COX8 and NDUFA4, which are encoded in the nuclear genome. The complex exists as a monomer or a dimer and forms supercomplexes (SCs) in the inner mitochondrial membrane with NADH-ubiquinone oxidoreductase (complex I, CI) and ubiquinol-cytochrome c oxidoreductase (cytochrome b-c1 complex, complex III, CIII), resulting in different assemblies (supercomplex SCI(1)III(2)IV(1) and megacomplex MCI(2)III(2)IV(2)).

It localises to the mitochondrion inner membrane. The catalysed reaction is 4 Fe(II)-[cytochrome c] + O2 + 8 H(+)(in) = 4 Fe(III)-[cytochrome c] + 2 H2O + 4 H(+)(out). Functionally, component of the cytochrome c oxidase, the last enzyme in the mitochondrial electron transport chain which drives oxidative phosphorylation. The respiratory chain contains 3 multisubunit complexes succinate dehydrogenase (complex II, CII), ubiquinol-cytochrome c oxidoreductase (cytochrome b-c1 complex, complex III, CIII) and cytochrome c oxidase (complex IV, CIV), that cooperate to transfer electrons derived from NADH and succinate to molecular oxygen, creating an electrochemical gradient over the inner membrane that drives transmembrane transport and the ATP synthase. Cytochrome c oxidase is the component of the respiratory chain that catalyzes the reduction of oxygen to water. Electrons originating from reduced cytochrome c in the intermembrane space (IMS) are transferred via the dinuclear copper A center (CU(A)) of subunit 2 and heme A of subunit 1 to the active site in subunit 1, a binuclear center (BNC) formed by heme A3 and copper B (CU(B)). The BNC reduces molecular oxygen to 2 water molecules using 4 electrons from cytochrome c in the IMS and 4 protons from the mitochondrial matrix. The sequence is that of Cytochrome c oxidase subunit 3 (mt-co3) from Formosania lacustris (Oriental stream loach).